The sequence spans 139 residues: Holo-[acyl-carrier-protein] synthase (139 aa).

Mg(2+)-binding residues include aspartate 8 and glutamate 61.

Belongs to the P-Pant transferase superfamily. AcpS family. It depends on Mg(2+) as a cofactor.

It is found in the cytoplasm. The enzyme catalyses apo-[ACP] + CoA = holo-[ACP] + adenosine 3',5'-bisphosphate + H(+). In terms of biological role, transfers the 4'-phosphopantetheine moiety from coenzyme A to a Ser of acyl-carrier-protein. This Bradyrhizobium diazoefficiens (strain JCM 10833 / BCRC 13528 / IAM 13628 / NBRC 14792 / USDA 110) protein is Holo-[acyl-carrier-protein] synthase.